We begin with the raw amino-acid sequence, 301 residues long: ATP synthase gamma chain (301 aa).

Belongs to the ATPase gamma chain family. In terms of assembly, F-type ATPases have 2 components, CF(1) - the catalytic core - and CF(0) - the membrane proton channel. CF(1) has five subunits: alpha(3), beta(3), gamma(1), delta(1), epsilon(1). CF(0) has three main subunits: a, b and c.

The protein resides in the cell inner membrane. In terms of biological role, produces ATP from ADP in the presence of a proton gradient across the membrane. The gamma chain is believed to be important in regulating ATPase activity and the flow of protons through the CF(0) complex. The protein is ATP synthase gamma chain of Helicobacter pylori (strain HPAG1).